Here is a 398-residue protein sequence, read N- to C-terminus: Serine/threonine-protein kinase UL13 (398 aa).

Gly residues predominate over residues 1-10 (MAAGGGGGGV). The tract at residues 1–44 (MAAGGGGGGVSRAALARPPIHRGTSAPGGAIAAAGGDGDGDEAS) is disordered. One can recognise a Protein kinase domain in the interval 80 to 398 (TGDPVAVGAG…GGARFAELAA (319 aa)). Residues 86 to 94 (VGAGSYGSV) and Lys103 contribute to the ATP site. The active-site Proton acceptor is the Asp194.

It belongs to the protein kinase superfamily. Ser/Thr protein kinase family. Post-translationally, autophosphorylated.

It is found in the virion tegument. The protein resides in the host nucleus. The protein localises to the host cytoplasm. It localises to the host endoplasmic reticulum. The catalysed reaction is L-seryl-[protein] + ATP = O-phospho-L-seryl-[protein] + ADP + H(+). It carries out the reaction L-threonyl-[protein] + ATP = O-phospho-L-threonyl-[protein] + ADP + H(+). Functionally, multifunctional serine/threonine kinase that plays a role in several processes including egress of virus particles from the nucleus, modulation of the actin cytoskeleton and regulation of viral and cellular gene expression. Regulates the nuclear localization of viral envelopment factors UL34 and UL31, by phosphorylating the US3 kinase, indicating a role in nuclear egress. Disrupts host nuclear lamins, including LMNA and LMNB1. Phosphorylates the viral Fc receptor composed of glycoproteins E (gE) and I (gI). Phosphorylation of glycoprotein E (gE) by UL13 alters its subcellular localization, from the host early endosome to the plasma membrane. Participates in the transcriptional regulation of cellular and viral mRNAs mainly by phosphorylating the viral transcriptional regulator ICP22. Functions as an antagonist of the host RLR-mediated antiviral responses via suppression of the transcription of cytosolic receptors RIGI and IFIH1. Facilitates immune evasion also by recruiting host RNF5 to initiate the 'Lys-27'-/'Lys-29'-linked polyubiquitination of STING1; leading to its degradation. Blocks host IFN-beta transactivation mediated by the cGAS-STING pathway by phosphorylating host IRF3. In turn, IRF3 binding to the IRF3-responsive promoters and downstream interferon stimulated genes/ISG expression are greatly impaired. Induces the activation of the host DNA damage response via H2AX phosphorylation to improve efficient viral replication and progeny production. This Suid herpesvirus 1 (strain NIA-3) (SuHV-1) protein is Serine/threonine-protein kinase UL13 (UL13).